We begin with the raw amino-acid sequence, 408 residues long: E3 ubiquitin-protein ligase At1g12760 (408 aa).

A disordered region spans residues 1 to 52 (MSTETTTGNSSLIPASSSSSSSDAIDPAPLLFNGDDNEGNNGGGGGERRSVR). A compositionally biased stretch (low complexity) spans 10–34 (SSLIPASSSSSSSDAIDPAPLLFNG). 2 consecutive transmembrane segments (helical) span residues 100 to 120 (VVVL…AILV) and 133 to 153 (VWLL…CVEY). Positions 160-195 (RTNRTTTTTPPRSRSSSSSSSSSSLEEEALGSRRNS) are disordered. A compositionally biased stretch (low complexity) spans 163–183 (RTTTTTPPRSRSSSSSSSSSS). Helical transmembrane passes span 219–239 (ANTM…SAGG), 254–274 (IVFL…ACVI), and 275–295 (GIAV…VADQ). The segment at 353–394 (CCICLSAYEDGTELRELPCGHHFHCSCVDKWLYINATCPLCK) adopts an RING-type; atypical zinc-finger fold.

Its subcellular location is the membrane. It carries out the reaction S-ubiquitinyl-[E2 ubiquitin-conjugating enzyme]-L-cysteine + [acceptor protein]-L-lysine = [E2 ubiquitin-conjugating enzyme]-L-cysteine + N(6)-ubiquitinyl-[acceptor protein]-L-lysine.. Its pathway is protein modification; protein ubiquitination. Mediates E2-dependent protein ubiquitination in vitro. This Arabidopsis thaliana (Mouse-ear cress) protein is E3 ubiquitin-protein ligase At1g12760.